We begin with the raw amino-acid sequence, 217 residues long: Phosphatidylcholine synthase (217 aa).

Residues 1-8 form a helical membrane-spanning segment; the sequence is ACIGVFSL. The Periplasmic segment spans residues 9–16; that stretch reads VKIYQHEY. Residues 17 to 37 traverse the membrane as a helical segment; it reads IFALWLMFITVVIDAVDGTLA. At 38-50 the chain is on the cytoplasmic side; that stretch reads RLVNIKKILPKID. Residues 51 to 71 form a helical membrane-spanning segment; sequence GALLDNIVDYLNYVITPCFFL. The Periplasmic segment spans residues 72-77; it reads LVKPGM. A helical transmembrane segment spans residues 78–98; sequence LPPEYSVFLIAAVSITSAYQF. Over 99–107 the chain is Cytoplasmic; it reads CQCDAKTPD. Residues 108–128 form a helical membrane-spanning segment; it reads HFFKGFPCYWNITILYMFIFN. T129 is a topological domain (periplasmic). A helical transmembrane segment spans residues 130–149; that stretch reads SAATNAIILIILSILIFVPV. Topologically, residues 150–164 are cytoplasmic; sequence KYVYPSRLDYLTESR. The chain crosses the membrane as a helical span at residues 165-185; the sequence is ILKILMHICSIIYAVSSICIL. Topologically, residues 186–191 are periplasmic; the sequence is ISYPNT. The chain crosses the membrane as a helical span at residues 192 to 212; it reads NIICLSLSVAYVGMYLFLSFY. At 213-217 the chain is on the cytoplasmic side; that stretch reads RTYYP.

This sequence belongs to the CDP-alcohol phosphatidyltransferase class-I family. Mn(2+) is required as a cofactor.

It localises to the cell inner membrane. It catalyses the reaction a CDP-1,2-diacyl-sn-glycerol + choline = a 1,2-diacyl-sn-glycero-3-phosphocholine + CMP + H(+). Condenses choline with CDP-diglyceride to produce phosphatidylcholine and CMP. This chain is Phosphatidylcholine synthase, found in Legionella bozemanae (Fluoribacter bozemanae).